Here is a 100-residue protein sequence, read N- to C-terminus: Cytochrome c2 iso-1 (100 aa).

Residues cysteine 11, cysteine 14, histidine 15, and methionine 76 each coordinate heme c.

Belongs to the cytochrome c family. In terms of processing, binds 1 heme c group covalently per subunit.

Its function is as follows. Cytochrome c2 is found mainly in purple, non-sulfur, photosynthetic bacteria where it functions as the electron donor to the oxidized bacteriochlorophyll in the photophosphorylation pathway. However, it may also have a role in the respiratory chain and is found in some non-photosynthetic bacteria. This Magnetospirillum molischianum (Rhodospirillum molischianum) protein is Cytochrome c2 iso-1.